The following is a 109-amino-acid chain: Large ribosomal subunit protein uL24 (109 aa).

The protein belongs to the universal ribosomal protein uL24 family. Part of the 50S ribosomal subunit.

Functionally, one of two assembly initiator proteins, it binds directly to the 5'-end of the 23S rRNA, where it nucleates assembly of the 50S subunit. In terms of biological role, one of the proteins that surrounds the polypeptide exit tunnel on the outside of the subunit. This Rickettsia massiliae (strain Mtu5) protein is Large ribosomal subunit protein uL24.